Reading from the N-terminus, the 231-residue chain is Orotidine 5'-phosphate decarboxylase (231 aa).

Substrate-binding positions include Asp9, Lys34, 62 to 71, Thr117, Arg179, Gln188, Gly208, and Arg209; that span reads DLKLHDIPSV. The active-site Proton donor is the Lys64.

It belongs to the OMP decarboxylase family. Type 1 subfamily. As to quaternary structure, homodimer.

It catalyses the reaction orotidine 5'-phosphate + H(+) = UMP + CO2. It participates in pyrimidine metabolism; UMP biosynthesis via de novo pathway; UMP from orotate: step 2/2. Functionally, catalyzes the decarboxylation of orotidine 5'-monophosphate (OMP) to uridine 5'-monophosphate (UMP). The polypeptide is Orotidine 5'-phosphate decarboxylase (Aquifex aeolicus (strain VF5)).